A 333-amino-acid polypeptide reads, in one-letter code: Bifunctional phosphoglucose/phosphomannose isomerase (333 aa).

An SIS domain is found at Leu22–Ala160. D-fructose 6-phosphate contacts are provided by Gly39, Ser40, Ser84, Ser86, Thr89, and Arg136. Residue Glu211 is the Proton acceptor of the active site. D-fructose 6-phosphate-binding residues include His227 and Lys322. Residue His227 is the Proton donor of the active site. Lys322 serves as the catalytic Proton acceptor.

The protein belongs to the PGI/PMI family. Homodimer.

It catalyses the reaction alpha-D-glucose 6-phosphate = beta-D-fructose 6-phosphate. The enzyme catalyses D-mannose 6-phosphate = D-fructose 6-phosphate. Its activity is regulated as follows. Inhibited by low concentrations of erythrose 4-phosphate and 6-phosphogluconate. In terms of biological role, dual specificity isomerase that catalyzes the isomerization of both glucose-6-phosphate and mannose-6-phosphate to fructose-6-phosphate with similar catalytic efficiency. In Aeropyrum pernix (strain ATCC 700893 / DSM 11879 / JCM 9820 / NBRC 100138 / K1), this protein is Bifunctional phosphoglucose/phosphomannose isomerase.